Here is a 630-residue protein sequence, read N- to C-terminus: MTFSTFTRKMRGRMRSNTCRIVLLTSLVWVIFDFVLIARYSDCIGKDGWRCKRSGEYDVELPNAERLVDDNQLVDDNEINTEKSLDGESGGALIMGQGFASGGISMTYPSVVLKKWFLAPSVQEAKGKPGEMGKPVKIPADMKDLMKEKFKENQFNLLASDMISLNRSLTDVRHEGCRRKHYASKLPTTSIVIVFHNEAWTTLLRTVWSVINRSPRALLKEIILVDDASERDFLGKQLEEYVAKLPVKTFVLRTEKRSGLIRARLLGAEHVSGEVITFLDAHCECTEGWLEPLLARIVQNRRTVVCPIIDVISDETFEYITASDSTWGGFNWKLNFRWYRVPSREMARRNNDRTAPLRTPTMAGGLFSIDKDYFYEIGSYDEGMDIWGGENLEMSFRIWQCGGILEIIPCSHVGHVFRDKSPYTFPGGVAKIVLHNAARVAEVWLDEWRDFYYSMSTGARKASAGDVSDRKALRDRLKCKSFRWYLENVYPESLMPLDYYYLGEIRNAETETCLDTMGRKYNEKVGISYCHGLGGNQVFAYTKRQQIMSDDLCLDASSSNGPVNMVRCHNMGGNQEWVYDAEEKWIRHTNTGQCLQRATRDDANTPLLRPCSYGKGQQWLMESKFKWQAH.

Over 1-20 the chain is Cytoplasmic; the sequence is MTFSTFTRKMRGRMRSNTCR. Residues 21–38 form a helical; Signal-anchor for type II membrane protein membrane-spanning segment; the sequence is IVLLTSLVWVIFDFVLIA. Topologically, residues 39 to 630 are lumenal; sequence RYSDCIGKDG…MESKFKWQAH (592 aa). The N-linked (GlcNAc...) asparagine glycan is linked to Asn166. 5 cysteine pairs are disulfide-bonded: Cys177/Cys410, Cys401/Cys479, Cys513/Cys530, Cys553/Cys568, and Cys594/Cys611. The segment at 186-296 is catalytic subdomain A; sequence LPTTSIVIVF…EGWLEPLLAR (111 aa). Substrate is bound by residues Asp227 and Arg257. Residues Asp280 and His282 each coordinate Mn(2+). The segment at 356-418 is catalytic subdomain B; it reads PLRTPTMAGG…PCSHVGHVFR (63 aa). Residue Trp387 participates in substrate binding. His415 contacts Mn(2+). The substrate site is built by Arg418 and Tyr423. One can recognise a Ricin B-type lectin domain in the interval 500–622; the sequence is YYLGEIRNAE…YGKGQQWLME (123 aa).

It belongs to the glycosyltransferase 2 family. GalNAc-T subfamily. It depends on Mn(2+) as a cofactor. In terms of tissue distribution, expressed during oogenesis, in the somatically derived follicle cells that surround the developing oocyte, which are involved in the maturation of the oocyte and construction of the egg shell, as well as playing a role in subsequent embryonic pattern formation. During embryonic stages 9-11, expressed in the primordium of the foregut, midgut and hindgut. Expressed in salivary glands from embryonic stage 12 onwards. During embryonic stages 12-13, expressed in the posterior midgut and hindgut. During embryonic stages 14-17, expressed in the hindgut and the posterior spiracles. Expression is also detected in the epidermis and antennomaxillary complex at embryonic stages 16-17. In third instar larvae, ubiquitously expressed in wing, eye-antennal, leg and haltere imaginal disks.

It localises to the golgi apparatus membrane. It catalyses the reaction L-seryl-[protein] + UDP-N-acetyl-alpha-D-galactosamine = a 3-O-[N-acetyl-alpha-D-galactosaminyl]-L-seryl-[protein] + UDP + H(+). The enzyme catalyses L-threonyl-[protein] + UDP-N-acetyl-alpha-D-galactosamine = a 3-O-[N-acetyl-alpha-D-galactosaminyl]-L-threonyl-[protein] + UDP + H(+). It participates in protein modification; protein glycosylation. Functionally, catalyzes the initial reaction in O-linked oligosaccharide biosynthesis, the transfer of an N-acetyl-D-galactosamine residue to a serine or threonine residue on the protein receptor. It can both act as a peptide transferase that transfers GalNAc onto unmodified peptide substrates, and as a glycopeptide transferase that requires the prior addition of a GalNAc on a peptide before adding additional GalNAc moieties. Prefers EA2 as substrate. In the larval midgut, required for O-glycosylation of apical and luminal proteins within copper cells enabling proper gut acidification. The polypeptide is Polypeptide N-acetylgalactosaminyltransferase 5 (Drosophila melanogaster (Fruit fly)).